We begin with the raw amino-acid sequence, 322 residues long: 4-hydroxy-3-methylbut-2-enyl diphosphate reductase (322 aa).

Cys15 provides a ligand contact to [4Fe-4S] cluster. The (2E)-4-hydroxy-3-methylbut-2-enyl diphosphate site is built by His44 and His77. 2 residues coordinate dimethylallyl diphosphate: His44 and His77. Residues His44 and His77 each contribute to the isopentenyl diphosphate site. Residue Cys99 coordinates [4Fe-4S] cluster. Residue His127 coordinates (2E)-4-hydroxy-3-methylbut-2-enyl diphosphate. His127 is a binding site for dimethylallyl diphosphate. An isopentenyl diphosphate-binding site is contributed by His127. Catalysis depends on Glu129, which acts as the Proton donor. Thr168 serves as a coordination point for (2E)-4-hydroxy-3-methylbut-2-enyl diphosphate. Cys198 is a binding site for [4Fe-4S] cluster. Residues Ser226, Ser227, Asn228, and Ser270 each contribute to the (2E)-4-hydroxy-3-methylbut-2-enyl diphosphate site. Dimethylallyl diphosphate is bound by residues Ser226, Ser227, Asn228, and Ser270. Residues Ser226, Ser227, Asn228, and Ser270 each contribute to the isopentenyl diphosphate site.

It belongs to the IspH family. The cofactor is [4Fe-4S] cluster.

The catalysed reaction is isopentenyl diphosphate + 2 oxidized [2Fe-2S]-[ferredoxin] + H2O = (2E)-4-hydroxy-3-methylbut-2-enyl diphosphate + 2 reduced [2Fe-2S]-[ferredoxin] + 2 H(+). It catalyses the reaction dimethylallyl diphosphate + 2 oxidized [2Fe-2S]-[ferredoxin] + H2O = (2E)-4-hydroxy-3-methylbut-2-enyl diphosphate + 2 reduced [2Fe-2S]-[ferredoxin] + 2 H(+). It functions in the pathway isoprenoid biosynthesis; dimethylallyl diphosphate biosynthesis; dimethylallyl diphosphate from (2E)-4-hydroxy-3-methylbutenyl diphosphate: step 1/1. The protein operates within isoprenoid biosynthesis; isopentenyl diphosphate biosynthesis via DXP pathway; isopentenyl diphosphate from 1-deoxy-D-xylulose 5-phosphate: step 6/6. Catalyzes the conversion of 1-hydroxy-2-methyl-2-(E)-butenyl 4-diphosphate (HMBPP) into a mixture of isopentenyl diphosphate (IPP) and dimethylallyl diphosphate (DMAPP). Acts in the terminal step of the DOXP/MEP pathway for isoprenoid precursor biosynthesis. The sequence is that of 4-hydroxy-3-methylbut-2-enyl diphosphate reductase from Neisseria meningitidis serogroup C (strain 053442).